The primary structure comprises 437 residues: tRNA-queuosine alpha-mannosyltransferase (437 aa).

It belongs to the glycosyltransferase group 1 family. Glycosyltransferase 4 subfamily.

The protein localises to the cytoplasm. It is found in the nucleus. The catalysed reaction is queuosine(34) in tRNA(Asp) + GDP-alpha-D-mannose = O-4''-alpha-D-mannosylqueuosine(34) in tRNA(Asp) + GDP + H(+). In terms of biological role, glycosyltransferase that specifically catalyzes mannosylation of cytoplasmic tRNA(Asp) modified with queuosine at position 34 (queuosine(34)). Mannosylates the cyclopentene moiety of queuosine(34) in tRNA(Asp) to form mannosyl-queuosine(34). Mannosylation of queuosine(34) in tRNA(Asp) is required to slow-down elongation at cognate codons, GAC and GAU, thereby regulating protein translation. This Xenopus laevis (African clawed frog) protein is tRNA-queuosine alpha-mannosyltransferase (gtdc1).